Consider the following 479-residue polypeptide: Glycerol-3-phosphate acyltransferase RAM2 (479 aa).

4 helical membrane-spanning segments follow: residues 14–34 (YFAL…LVLA), 37–57 (LAGL…LIFA), 215–235 (SPLM…LACL), and 237–257 (IAAG…ALGV). The HXXXXD motif motif lies at 284 to 289 (HRTLLD). The N-linked (GlcNAc...) asparagine glycan is linked to Asn-448.

The protein belongs to the GPAT/DAPAT family.

It is found in the membrane. The catalysed reaction is sn-glycerol 3-phosphate + an acyl-CoA = a 1-acyl-sn-glycero-3-phosphate + CoA. It functions in the pathway lipid metabolism; glycerolipid metabolism. Involved in the production of cutin monomers. Esterifies acyl-group from acyl-ACP to the sn-2 position of glycerol-3-phosphate, a step in cutin biosynthesis. Required for colonization of the root by mycorrhizal fungi, and appropriate hyphopodia and arbuscule formation. Cutin monomers act as plant signals that promote colonization by arbuscular mycorrhizal fungi. This signaling function has been recruited by pathogenic oomycetes to facilitate appressoria formation and their own invasion. This Petunia hybrida (Petunia) protein is Glycerol-3-phosphate acyltransferase RAM2.